The primary structure comprises 181 residues: Peptide methionine sulfoxide reductase MsrA (181 aa).

The active site involves cysteine 14.

This sequence belongs to the MsrA Met sulfoxide reductase family.

The catalysed reaction is L-methionyl-[protein] + [thioredoxin]-disulfide + H2O = L-methionyl-(S)-S-oxide-[protein] + [thioredoxin]-dithiol. The enzyme catalyses [thioredoxin]-disulfide + L-methionine + H2O = L-methionine (S)-S-oxide + [thioredoxin]-dithiol. Functionally, has an important function as a repair enzyme for proteins that have been inactivated by oxidation. Catalyzes the reversible oxidation-reduction of methionine sulfoxide in proteins to methionine. The polypeptide is Peptide methionine sulfoxide reductase MsrA (Bacillus licheniformis (strain ATCC 14580 / DSM 13 / JCM 2505 / CCUG 7422 / NBRC 12200 / NCIMB 9375 / NCTC 10341 / NRRL NRS-1264 / Gibson 46)).